The sequence spans 860 residues: Glucans biosynthesis glucosyltransferase H (860 aa).

Transmembrane regions (helical) follow at residues I146–L166, I200–M220, V519–L539, L576–W596, T610–F630, and F686–I706.

The protein belongs to the glycosyltransferase 2 family. OpgH subfamily.

The protein resides in the cell inner membrane. It functions in the pathway glycan metabolism; osmoregulated periplasmic glucan (OPG) biosynthesis. Functionally, involved in the biosynthesis of osmoregulated periplasmic glucans (OPGs). The polypeptide is Glucans biosynthesis glucosyltransferase H (Pseudomonas savastanoi pv. phaseolicola (strain 1448A / Race 6) (Pseudomonas syringae pv. phaseolicola (strain 1448A / Race 6))).